A 131-amino-acid chain; its full sequence is Large ribosomal subunit protein mL60 (131 aa).

The N-terminal 12 residues, 1–12 (MFGPFKLTSPVA), are a transit peptide targeting the mitochondrion.

Belongs to the mitochondrion-specific ribosomal protein mL60 family. Component of the mitochondrial large ribosomal subunit (mt-LSU). Mature yeast 74S mitochondrial ribosomes consist of a small (37S) and a large (54S) subunit. The 37S small subunit contains a 15S ribosomal RNA (15S mt-rRNA) and 34 different proteins. The 54S large subunit contains a 21S rRNA (21S mt-rRNA) and 46 different proteins.

The protein resides in the mitochondrion. In terms of biological role, component of the mitochondrial ribosome (mitoribosome), a dedicated translation machinery responsible for the synthesis of mitochondrial genome-encoded proteins, including at least some of the essential transmembrane subunits of the mitochondrial respiratory chain. The mitoribosomes are attached to the mitochondrial inner membrane and translation products are cotranslationally integrated into the membrane. This chain is Large ribosomal subunit protein mL60 (MRPL31), found in Saccharomyces cerevisiae (strain ATCC 204508 / S288c) (Baker's yeast).